A 232-amino-acid polypeptide reads, in one-letter code: Large ribosomal subunit protein uL1 (232 aa).

This sequence belongs to the universal ribosomal protein uL1 family. As to quaternary structure, part of the 50S ribosomal subunit.

In terms of biological role, binds directly to 23S rRNA. The L1 stalk is quite mobile in the ribosome, and is involved in E site tRNA release. Protein L1 is also a translational repressor protein, it controls the translation of the L11 operon by binding to its mRNA. The protein is Large ribosomal subunit protein uL1 of Clostridium novyi (strain NT).